The chain runs to 417 residues: 4-hydroxy-3-methylbut-2-enyl diphosphate reductase (417 aa).

Cysteine 56 lines the [4Fe-4S] cluster pocket. Residue histidine 86 coordinates (2E)-4-hydroxy-3-methylbut-2-enyl diphosphate. Histidine 86 contributes to the dimethylallyl diphosphate binding site. Residue histidine 86 participates in isopentenyl diphosphate binding. Cysteine 151 contacts [4Fe-4S] cluster. Histidine 179 lines the (2E)-4-hydroxy-3-methylbut-2-enyl diphosphate pocket. Histidine 179 provides a ligand contact to dimethylallyl diphosphate. Histidine 179 serves as a coordination point for isopentenyl diphosphate. The active-site Proton donor is glutamate 181. (2E)-4-hydroxy-3-methylbut-2-enyl diphosphate is bound at residue threonine 244. Cysteine 282 is a binding site for [4Fe-4S] cluster. Residues serine 311, serine 312, asparagine 313, and serine 374 each contribute to the (2E)-4-hydroxy-3-methylbut-2-enyl diphosphate site. 4 residues coordinate dimethylallyl diphosphate: serine 311, serine 312, asparagine 313, and serine 374. Isopentenyl diphosphate is bound by residues serine 311, serine 312, asparagine 313, and serine 374.

This sequence belongs to the IspH family. [4Fe-4S] cluster serves as cofactor.

It carries out the reaction isopentenyl diphosphate + 2 oxidized [2Fe-2S]-[ferredoxin] + H2O = (2E)-4-hydroxy-3-methylbut-2-enyl diphosphate + 2 reduced [2Fe-2S]-[ferredoxin] + 2 H(+). The enzyme catalyses dimethylallyl diphosphate + 2 oxidized [2Fe-2S]-[ferredoxin] + H2O = (2E)-4-hydroxy-3-methylbut-2-enyl diphosphate + 2 reduced [2Fe-2S]-[ferredoxin] + 2 H(+). Its pathway is isoprenoid biosynthesis; dimethylallyl diphosphate biosynthesis; dimethylallyl diphosphate from (2E)-4-hydroxy-3-methylbutenyl diphosphate: step 1/1. It participates in isoprenoid biosynthesis; isopentenyl diphosphate biosynthesis via DXP pathway; isopentenyl diphosphate from 1-deoxy-D-xylulose 5-phosphate: step 6/6. In terms of biological role, catalyzes the conversion of 1-hydroxy-2-methyl-2-(E)-butenyl 4-diphosphate (HMBPP) into a mixture of isopentenyl diphosphate (IPP) and dimethylallyl diphosphate (DMAPP). Acts in the terminal step of the DOXP/MEP pathway for isoprenoid precursor biosynthesis. This Gloeobacter violaceus (strain ATCC 29082 / PCC 7421) protein is 4-hydroxy-3-methylbut-2-enyl diphosphate reductase.